A 101-amino-acid chain; its full sequence is Phosphoribosyl-AMP cyclohydrolase (101 aa).

Asp-71 contributes to the Mg(2+) binding site. Position 72 (Cys-72) interacts with Zn(2+). 2 residues coordinate Mg(2+): Asp-73 and Asp-75. Zn(2+) is bound by residues Cys-88 and Cys-95.

Belongs to the PRA-CH family. Homodimer. The cofactor is Mg(2+). Zn(2+) is required as a cofactor.

It localises to the cytoplasm. It catalyses the reaction 1-(5-phospho-beta-D-ribosyl)-5'-AMP + H2O = 1-(5-phospho-beta-D-ribosyl)-5-[(5-phospho-beta-D-ribosylamino)methylideneamino]imidazole-4-carboxamide. It functions in the pathway amino-acid biosynthesis; L-histidine biosynthesis; L-histidine from 5-phospho-alpha-D-ribose 1-diphosphate: step 3/9. Catalyzes the hydrolysis of the adenine ring of phosphoribosyl-AMP. This chain is Phosphoribosyl-AMP cyclohydrolase, found in Bacillus cereus (strain AH820).